Reading from the N-terminus, the 260-residue chain is MKVRTLTAIIALLIFLPILLKGGLILMLFAFLLALIALKELLNMNMIKFLSIPGLISALALIIIMLPQDAGEWVQVIQLKGLIAMSFIVLSYTVLSKNRFSFMDAAFCLMSVAYVGIGFMYFYETRSEGLRYILFAFLIVWLTDTGAYIFGRLMGKHKLWPVISPNKTIEGFFGGILCSILVPLVMQMFVDLHMNIWLLLLVTIVLSMFGQLGDLVESGFKRHFGVKDSGRILPGHGGILDRFDSFMFVLPLLNILLIQT.

Transmembrane regions (helical) follow at residues 9 to 29 (IIAL…LMLF), 46 to 66 (MIKF…IIML), 70 to 90 (AGEW…FIVL), 102 to 122 (FMDA…FMYF), 130 to 150 (LRYI…AYIF), 172 to 192 (FFGG…FVDL), and 196 to 216 (IWLL…GDLV).

It belongs to the CDS family.

It is found in the cell membrane. The enzyme catalyses a 1,2-diacyl-sn-glycero-3-phosphate + CTP + H(+) = a CDP-1,2-diacyl-sn-glycerol + diphosphate. The protein operates within phospholipid metabolism; CDP-diacylglycerol biosynthesis; CDP-diacylglycerol from sn-glycerol 3-phosphate: step 3/3. The sequence is that of Phosphatidate cytidylyltransferase (cdsA) from Staphylococcus epidermidis (strain ATCC 35984 / DSM 28319 / BCRC 17069 / CCUG 31568 / BM 3577 / RP62A).